Consider the following 521-residue polypeptide: MKIVILAPTITPIVSYGGLGDVMRDLPKFLKKGNEVVVLTLNHYNRYFTLPYEDIKKITVIYKGAKITFDVLRTKHPTTGVDLIVFSNESVNNLNVWDPIKYEIFADLVITYLDEVKDIDVVSGHDWMCGLAIAKCNDILDLPTTLTIHNEAFKGEMIEYKGEVMTFLELGIKYADAVNTVSPSHAEEIKNYPYIKKYLNNKPFCGILNGIDIDEYDPMKIIERMCNLSNNKLDPRNYAYISPYSAEDSHNIKPKIKYSWFYRGGVYEYVEDWNKIDKGISATDVEVHGGVDGDIETPLIGFVGRATHQKGFNTMFEAIPELLEKHDIRFVFLTKGDRDIEERLKNLANEHDGRILALIGYSLPLSSLVFAGSDWIIMPSYWEPCGLVQMEAMAYCTPVIATETGGLKDTIIPLHPNPYEHPNFDKATGVLFKVPDKVGFMWGVEHALNWTFYKLNEICMFMQYIRYKCPKHPYDENSPLSMMMKNCYYHVFRNLSWQNSPSIRKYKGLFGGAIYNHYLQP.

It belongs to the glycosyltransferase 1 family. Bacterial/plant glycogen synthase subfamily.

It catalyses the reaction [(1-&gt;4)-alpha-D-glucosyl](n) + ADP-alpha-D-glucose = [(1-&gt;4)-alpha-D-glucosyl](n+1) + ADP + H(+). The protein operates within glycan biosynthesis; glycogen biosynthesis. Functionally, synthesizes alpha-1,4-glucan chains using ADP-glucose. The sequence is that of Probable glycogen synthase (glgA) from Methanocaldococcus jannaschii (strain ATCC 43067 / DSM 2661 / JAL-1 / JCM 10045 / NBRC 100440) (Methanococcus jannaschii).